A 417-amino-acid chain; its full sequence is Hydrogen cyanide synthase subunit HcnC (417 aa).

Positions 1–18 (MIKHYDVVIAGGGVIGAS) are cleaved as a signal peptide. 7-21 (VVIAGGGVIGASCAY) contributes to the FAD binding site. A lipid anchor (N-palmitoyl cysteine) is attached at C19. A lipid anchor (S-diacylglycerol cysteine) is attached at C19. Residues 46 to 66 (SAGGLWAIGESVGLGCGVIFF) traverse the membrane as a helical segment.

The protein belongs to the FAD-dependent glycerol-3-phosphate dehydrogenase family. Heterotrimer of HcnA, HcnB and HcnC.

The protein localises to the cell membrane. The catalysed reaction is glycine + 2 A = hydrogen cyanide + 2 AH2 + CO2. A three-component membrane-bound flavoenzyme that catalyzes the formation of hydrogen cyanide, a secondary metabolite, by transfer of electrons to a cyanide-resistant branch of the aerobic respiratory chain. Contributes to suppression of black root rot of tobacco. This Pseudomonas protegens (strain DSM 19095 / LMG 27888 / CFBP 6595 / CHA0) protein is Hydrogen cyanide synthase subunit HcnC.